We begin with the raw amino-acid sequence, 316 residues long: Aspartate carbamoyltransferase catalytic subunit (316 aa).

Arginine 59 and threonine 60 together coordinate carbamoyl phosphate. An L-aspartate-binding site is contributed by lysine 88. The carbamoyl phosphate site is built by arginine 109, histidine 137, and glutamine 140. L-aspartate is bound by residues arginine 170 and arginine 232. Carbamoyl phosphate is bound by residues leucine 269 and proline 270.

Belongs to the aspartate/ornithine carbamoyltransferase superfamily. ATCase family. In terms of assembly, heterooligomer of catalytic and regulatory chains.

It carries out the reaction carbamoyl phosphate + L-aspartate = N-carbamoyl-L-aspartate + phosphate + H(+). Its pathway is pyrimidine metabolism; UMP biosynthesis via de novo pathway; (S)-dihydroorotate from bicarbonate: step 2/3. In terms of biological role, catalyzes the condensation of carbamoyl phosphate and aspartate to form carbamoyl aspartate and inorganic phosphate, the committed step in the de novo pyrimidine nucleotide biosynthesis pathway. This Methanobrevibacter smithii (strain ATCC 35061 / DSM 861 / OCM 144 / PS) protein is Aspartate carbamoyltransferase catalytic subunit.